The following is a 59-amino-acid chain: Temporin-CDYe (59 aa).

The first 22 residues, 1–22 (MFTLKKSMLLLLFLGTISLTLC), serve as a signal peptide directing secretion. The propeptide occupies 23-42 (EEERDANEEEENGGEVKVEE).

Belongs to the frog skin active peptide (FSAP) family. Temporin subfamily. In terms of tissue distribution, expressed by the skin glands.

Its subcellular location is the secreted. Its function is as follows. Antimicrobial peptide. In Rana dybowskii (Dybovsky's frog), this protein is Temporin-CDYe.